Here is a 446-residue protein sequence, read N- to C-terminus: Tubulin beta-6 chain (446 aa).

Positions 1–4 (MREI) match the MREI motif motif. The GTP site is built by Q11, E69, S138, G142, T143, and G144. Position 69 (E69) interacts with Mg(2+). S172 is modified (phosphoserine; by CDK1). GTP contacts are provided by N204 and N226. A 5-glutamyl polyglutamate modification is found at E438.

It belongs to the tubulin family. As to quaternary structure, dimer of alpha and beta chains. A typical microtubule is a hollow water-filled tube with an outer diameter of 25 nm and an inner diameter of 15 nM. Alpha-beta heterodimers associate head-to-tail to form protofilaments running lengthwise along the microtubule wall with the beta-tubulin subunit facing the microtubule plus end conferring a structural polarity. Microtubules usually have 13 protofilaments but different protofilament numbers can be found in some organisms and specialized cells. The cofactor is Mg(2+). Some glutamate residues at the C-terminus are polyglycylated, resulting in polyglycine chains on the gamma-carboxyl group. Glycylation is mainly limited to tubulin incorporated into axonemes (cilia and flagella) whereas glutamylation is prevalent in neuronal cells, centrioles, axonemes, and the mitotic spindle. Both modifications can coexist on the same protein on adjacent residues, and lowering polyglycylation levels increases polyglutamylation, and reciprocally. Cilia and flagella glycylation is required for their stability and maintenance. Flagella glycylation controls sperm motility. In terms of processing, some glutamate residues at the C-terminus are polyglutamylated, resulting in polyglutamate chains on the gamma-carboxyl group. Polyglutamylation plays a key role in microtubule severing by spastin (SPAST). SPAST preferentially recognizes and acts on microtubules decorated with short polyglutamate tails: severing activity by SPAST increases as the number of glutamates per tubulin rises from one to eight, but decreases beyond this glutamylation threshold. Glutamylation is also involved in cilia motility. Post-translationally, phosphorylated on Ser-172 by CDK1 during the cell cycle, from metaphase to telophase, but not in interphase. This phosphorylation inhibits tubulin incorporation into microtubules.

The protein resides in the cytoplasm. It is found in the cytoskeleton. Its function is as follows. Tubulin is the major constituent of microtubules, a cylinder consisting of laterally associated linear protofilaments composed of alpha- and beta-tubulin heterodimers. Microtubules grow by the addition of GTP-tubulin dimers to the microtubule end, where a stabilizing cap forms. Below the cap, tubulin dimers are in GDP-bound state, owing to GTPase activity of alpha-tubulin. The chain is Tubulin beta-6 chain (TUBB6) from Bos taurus (Bovine).